Consider the following 287-residue polypeptide: Putative glutamate--cysteine ligase regulatory subunit (287 aa).

Belongs to the aldo/keto reductase family. Glutamate--cysteine ligase light chain subfamily. As to quaternary structure, heterodimer of a catalytic heavy chain and a regulatory light chain.

It is found in the cytoplasm. It participates in sulfur metabolism; glutathione biosynthesis; glutathione from L-cysteine and L-glutamate: step 1/2. The sequence is that of Putative glutamate--cysteine ligase regulatory subunit from Schizosaccharomyces pombe (strain 972 / ATCC 24843) (Fission yeast).